The sequence spans 184 residues: Acireductone dioxygenase (184 aa).

Fe(2+)-binding residues include H87, H89, E93, and H137. Residues H87, H89, E93, and H137 each contribute to the Ni(2+) site.

This sequence belongs to the acireductone dioxygenase (ARD) family. It depends on Fe(2+) as a cofactor. The cofactor is Ni(2+).

It is found in the cytoplasm. Its subcellular location is the nucleus. The catalysed reaction is 1,2-dihydroxy-5-(methylsulfanyl)pent-1-en-3-one + O2 = 4-methylsulfanyl-2-oxobutanoate + formate + 2 H(+). It carries out the reaction 1,2-dihydroxy-5-(methylsulfanyl)pent-1-en-3-one + O2 = 3-(methylsulfanyl)propanoate + CO + formate + 2 H(+). The protein operates within amino-acid biosynthesis; L-methionine biosynthesis via salvage pathway; L-methionine from S-methyl-5-thio-alpha-D-ribose 1-phosphate: step 5/6. Catalyzes 2 different reactions between oxygen and the acireductone 1,2-dihydroxy-3-keto-5-methylthiopentene (DHK-MTPene) depending upon the metal bound in the active site. Fe-containing acireductone dioxygenase (Fe-ARD) produces formate and 2-keto-4-methylthiobutyrate (KMTB), the alpha-ketoacid precursor of methionine in the methionine recycle pathway. Ni-containing acireductone dioxygenase (Ni-ARD) produces methylthiopropionate, carbon monoxide and formate, and does not lie on the methionine recycle pathway. The chain is Acireductone dioxygenase from Ciona intestinalis (Transparent sea squirt).